The following is a 949-amino-acid chain: Glycine dehydrogenase (decarboxylating) (949 aa).

N6-(pyridoxal phosphate)lysine is present on lysine 704.

This sequence belongs to the GcvP family. The glycine cleavage system is composed of four proteins: P, T, L and H. The cofactor is pyridoxal 5'-phosphate.

It carries out the reaction N(6)-[(R)-lipoyl]-L-lysyl-[glycine-cleavage complex H protein] + glycine + H(+) = N(6)-[(R)-S(8)-aminomethyldihydrolipoyl]-L-lysyl-[glycine-cleavage complex H protein] + CO2. In terms of biological role, the glycine cleavage system catalyzes the degradation of glycine. The P protein binds the alpha-amino group of glycine through its pyridoxal phosphate cofactor; CO(2) is released and the remaining methylamine moiety is then transferred to the lipoamide cofactor of the H protein. This chain is Glycine dehydrogenase (decarboxylating), found in Bacteroides fragilis (strain YCH46).